A 440-amino-acid chain; its full sequence is T-box transcription factor TBX20 (440 aa).

The T-box DNA-binding region spans 103-282 (LWDKFHDLGT…SNPFAKGFRD (180 aa)).

It is found in the nucleus. Transcriptional regulator that may be involved in heart developmental processes. The sequence is that of T-box transcription factor TBX20 (tbx20) from Xenopus tropicalis (Western clawed frog).